A 331-amino-acid polypeptide reads, in one-letter code: ADP-L-glycero-D-manno-heptose-6-epimerase (331 aa).

NADP(+) contacts are provided by residues 11–12 (FI), 32–33 (DN), Lys39, Lys54, 75–79 (EGACS), and Asn92. Tyr139 acts as the Proton acceptor in catalysis. Lys143 lines the NADP(+) pocket. Asn168 is a substrate binding site. NADP(+) is bound by residues Val169 and Lys177. Lys177 functions as the Proton acceptor in the catalytic mechanism. Residues Arg179, His186, 200-203 (FGEY), Arg213, and Tyr292 contribute to the substrate site.

Belongs to the NAD(P)-dependent epimerase/dehydratase family. HldD subfamily. In terms of assembly, homopentamer. NADP(+) is required as a cofactor.

The catalysed reaction is ADP-D-glycero-beta-D-manno-heptose = ADP-L-glycero-beta-D-manno-heptose. The protein operates within nucleotide-sugar biosynthesis; ADP-L-glycero-beta-D-manno-heptose biosynthesis; ADP-L-glycero-beta-D-manno-heptose from D-glycero-beta-D-manno-heptose 7-phosphate: step 4/4. In terms of biological role, catalyzes the interconversion between ADP-D-glycero-beta-D-manno-heptose and ADP-L-glycero-beta-D-manno-heptose via an epimerization at carbon 6 of the heptose. In Cupriavidus necator (strain ATCC 17699 / DSM 428 / KCTC 22496 / NCIMB 10442 / H16 / Stanier 337) (Ralstonia eutropha), this protein is ADP-L-glycero-D-manno-heptose-6-epimerase.